The chain runs to 35 residues: Probable L,D-transpeptidase ErfK/SrfK (35 aa).

Residues 1 to 21 (MRRVKLLCTALMLLASHGALA) form the signal peptide.

It belongs to the YkuD family.

It localises to the periplasm. It participates in cell wall biogenesis; peptidoglycan biosynthesis. The polypeptide is Probable L,D-transpeptidase ErfK/SrfK (erfK) (Klebsiella aerogenes (Enterobacter aerogenes)).